The sequence spans 241 residues: uncharacterized protein (241 aa).

The segment at 19-53 (KRIGYGMGEKSSAGSSRDQTYSVKPASDVKDKKKV) is disordered. A compositionally biased stretch (polar residues) spans 30-39 (SAGSSRDQTY).

This is an uncharacterized protein from Ostreid herpesvirus 1 (isolate France) (OsHV-1).